Here is a 257-residue protein sequence, read N- to C-terminus: Imidazole glycerol phosphate synthase subunit HisF (257 aa).

Residues Asp-11 and Asp-130 contribute to the active site.

It belongs to the HisA/HisF family. As to quaternary structure, heterodimer of HisH and HisF.

The protein localises to the cytoplasm. The catalysed reaction is 5-[(5-phospho-1-deoxy-D-ribulos-1-ylimino)methylamino]-1-(5-phospho-beta-D-ribosyl)imidazole-4-carboxamide + L-glutamine = D-erythro-1-(imidazol-4-yl)glycerol 3-phosphate + 5-amino-1-(5-phospho-beta-D-ribosyl)imidazole-4-carboxamide + L-glutamate + H(+). It participates in amino-acid biosynthesis; L-histidine biosynthesis; L-histidine from 5-phospho-alpha-D-ribose 1-diphosphate: step 5/9. IGPS catalyzes the conversion of PRFAR and glutamine to IGP, AICAR and glutamate. The HisF subunit catalyzes the cyclization activity that produces IGP and AICAR from PRFAR using the ammonia provided by the HisH subunit. The sequence is that of Imidazole glycerol phosphate synthase subunit HisF from Tolumonas auensis (strain DSM 9187 / NBRC 110442 / TA 4).